Consider the following 393-residue polypeptide: 6-hydroxy-3-succinoylpyridine 3-monooxygenase HspB (393 aa).

FAD-binding positions include 6–35 and 277–287; these read RVIIVGGGPVGLLTALGLAKAGTNVVVLEA and MRNGRVILIGD.

The protein belongs to the PheA/TfdB FAD monooxygenase family. Homodimer. Requires FAD as cofactor.

The catalysed reaction is 4-(6-hydroxypyridin-3-yl)-4-oxobutanoate + 2 NADH + O2 + 2 H(+) = 2,5-dihydroxypyridine + succinate semialdehyde + 2 NAD(+) + H2O. It functions in the pathway alkaloid degradation; nicotine degradation. With respect to regulation, inhibited by Cu(2+) and Zn(2+). Its function is as follows. Involved in the nicotine degradation. Catalyzes the cleavage of 6-hydroxy-3-succinoylpyridine (HSP) by incorporation of oxygen at the 3-position to produce to 2,5-dihydroxypyridine (DHP) and succinic semialdehyde. This Pseudomonas putida (strain DSM 28022 / S16) protein is 6-hydroxy-3-succinoylpyridine 3-monooxygenase HspB.